The chain runs to 54 residues: Small ribosomal subunit protein uS14 (54 aa).

4 residues coordinate Zn(2+): Cys-19, Cys-22, Cys-37, and Cys-40.

The protein belongs to the universal ribosomal protein uS14 family. Zinc-binding uS14 subfamily. In terms of assembly, part of the 30S ribosomal subunit. Zn(2+) is required as a cofactor.

Binds 16S rRNA, required for the assembly of 30S particles. The sequence is that of Small ribosomal subunit protein uS14 from Pyrobaculum aerophilum (strain ATCC 51768 / DSM 7523 / JCM 9630 / CIP 104966 / NBRC 100827 / IM2).